The primary structure comprises 530 residues: Carbohydrate sulfotransferase 2 (530 aa).

The segment at 1–20 (MSRSSPRALPPGALPRPLPA) is disordered. Residues 1–54 (MSRSSPRALPPGALPRPLPAAPAAVQRALLPPWPRRAGRRWPASPLGMKVFRRK) are Cytoplasmic-facing. Residues 8–20 (ALPPGALPRPLPA) show a composition bias toward pro residues. A helical; Signal-anchor for type II membrane protein membrane pass occupies residues 55-75 (ALVLCAGYALLLVLTMLNLLD). At 76 to 530 (YKWHKEPLQQ…SKTLLRKPRL (455 aa)) the chain is on the lumenal side. The tract at residues 97-128 (GAAGAGWGRPGSPPAAPPRAHSRMDPRTPYRP) is disordered. 173 to 179 (WRSGSSF) provides a ligand contact to 3'-phosphoadenylyl sulfate. Residue Asn243 is glycosylated (N-linked (GlcNAc...) asparagine). 332–340 (RDPRAVASS) lines the 3'-phosphoadenylyl sulfate pocket. Residues Asn457 and Asn475 are each glycosylated (N-linked (GlcNAc...) asparagine).

It belongs to the sulfotransferase 1 family. Gal/GlcNAc/GalNAc subfamily. As to quaternary structure, homodimer; disulfide-linked. Homodimerization is not essential for enzyme activity. In brain, it is expressed in pyramidal cells in the CA3 subregion of the hippocampus, cerebellar nucleus and Purkinje cells. Expressed in peripheral lymph nodes.

The protein resides in the golgi apparatus. It localises to the trans-Golgi network membrane. The enzyme catalyses 3-O-{N-acetyl-beta-D-glucosaminyl-(1-&gt;3)-beta-D-galactosyl-(1-&gt;3)-N-acetyl-alpha-D-galactosaminyl}-L-threonyl-[protein] + 3'-phosphoadenylyl sulfate = 3-O-{6-O-sulfo-N-acetyl-beta-D-glucosaminyl-(1-&gt;3)-beta-D-galactosyl-(1-&gt;3)-N-acetyl-alpha-D-galactosaminyl}-L-threonyl-[protein] + adenosine 3',5'-bisphosphate + H(+). The catalysed reaction is 3-O-{N-acetyl-beta-D-glucosaminyl-(1-&gt;3)-beta-D-galactosyl-(1-&gt;3)-N-acetyl-alpha-D-galactosaminyl}-L-seryl-[protein] + 3'-phosphoadenylyl sulfate = 3-O-{6-O-sulfo-N-acetyl-beta-D-glucosaminyl-(1-&gt;3)-beta-D-galactosyl-(1-&gt;3)-N-acetyl-alpha-D-galactosaminyl}-L-seryl-[protein] + adenosine 3',5'-bisphosphate + H(+). It catalyses the reaction a 3-O-{beta-D-galactosyl-(1-&gt;3)-[N-acetyl-beta-D-glucosaminyl-(1-&gt;6)]-N-acetyl-alpha-D-galactosaminyl}-L-threonyl-[protein] + 3'-phosphoadenylyl sulfate = 3-O-{beta-D-galactosyl-(1-&gt;3)-[6-O-sulfo-N-acetyl-beta-D-glucosaminyl-(1-&gt;6)]-N-acetyl-alpha-D-galactosaminyl}-L-threonyl-[protein] + adenosine 3',5'-bisphosphate + H(+). It carries out the reaction 3-O-{beta-D-galactosyl-(1-&gt;3)-[N-acetyl-beta-D-glucosaminyl-(1-&gt;6)]-N-acetyl-alpha-D-galactosaminyl}-L-seryl-[protein] + 3'-phosphoadenylyl sulfate = 3-O-{beta-D-galactosyl-(1-&gt;3)-[6-O-sulfo-N-acetyl-beta-D-glucosaminyl-(1-&gt;6)]-N-acetyl-alpha-D-galactosaminyl}-L-seryl-[protein] + adenosine 3',5'-bisphosphate + H(+). The protein operates within protein modification; carbohydrate sulfation. In terms of biological role, sulfotransferase that utilizes 3'-phospho-5'-adenylyl sulfate (PAPS) as sulfonate donor to catalyze the transfer of sulfate to position 6 of non-reducing N-acetylglucosamine (GlcNAc) residues within keratan-like structures on N-linked glycans and within mucin-associated glycans that can ultimately serve as SELL ligands. SELL ligands are present in high endothelial cells (HEVs) and play a central role in lymphocyte homing at sites of inflammation. Participates in biosynthesis of the SELL ligand sialyl 6-sulfo Lewis X and in lymphocyte homing to Peyer patches. Has no activity toward O-linked sugars. Its substrate specificity may be influenced by its subcellular location. Sulfates GlcNAc residues at terminal, non-reducing ends of oligosaccharide chains. In Mus musculus (Mouse), this protein is Carbohydrate sulfotransferase 2 (Chst2).